A 116-amino-acid chain; its full sequence is Ribonuclease P protein component (116 aa).

It belongs to the RnpA family. As to quaternary structure, consists of a catalytic RNA component (M1 or rnpB) and a protein subunit.

The enzyme catalyses Endonucleolytic cleavage of RNA, removing 5'-extranucleotides from tRNA precursor.. In terms of biological role, RNaseP catalyzes the removal of the 5'-leader sequence from pre-tRNA to produce the mature 5'-terminus. It can also cleave other RNA substrates such as 4.5S RNA. The protein component plays an auxiliary but essential role in vivo by binding to the 5'-leader sequence and broadening the substrate specificity of the ribozyme. In Thermoanaerobacter pseudethanolicus (strain ATCC 33223 / 39E) (Clostridium thermohydrosulfuricum), this protein is Ribonuclease P protein component.